The following is a 277-amino-acid chain: Energy-coupling factor transporter ATP-binding protein EcfA1 (277 aa).

The region spanning L5–D240 is the ABC transporter domain. Residue G40–S47 coordinates ATP.

This sequence belongs to the ABC transporter superfamily. Energy-coupling factor EcfA family. In terms of assembly, forms a stable energy-coupling factor (ECF) transporter complex composed of 2 membrane-embedded substrate-binding proteins (S component), 2 ATP-binding proteins (A component) and 2 transmembrane proteins (T component).

Its subcellular location is the cell membrane. ATP-binding (A) component of a common energy-coupling factor (ECF) ABC-transporter complex. Unlike classic ABC transporters this ECF transporter provides the energy necessary to transport a number of different substrates. This Lactococcus lactis subsp. lactis (strain IL1403) (Streptococcus lactis) protein is Energy-coupling factor transporter ATP-binding protein EcfA1.